The primary structure comprises 85 residues: Toxin BmKITc (85 aa).

An N-terminal signal peptide occupies residues 1–21 (MKLFLLLVIFASMLNDGLVNA). The LCN-type CS-alpha/beta domain maps to 22-82 (DGYIRGSDGC…KWKYESNTCG (61 aa)). 4 disulfides stabilise this stretch: Cys31/Cys81, Cys35/Cys56, Cys42/Cys63, and Cys46/Cys65.

Belongs to the long (4 C-C) scorpion toxin superfamily. Sodium channel inhibitor family. Beta subfamily. As to expression, expressed by the venom gland.

It is found in the secreted. Functionally, depressant insect beta-toxins cause a transient contraction paralysis followed by a slow flaccid paralysis. They bind voltage-independently at site-4 of sodium channels (Nav) and shift the voltage of activation toward more negative potentials thereby affecting sodium channel activation and promoting spontaneous and repetitive firing. In Olivierus martensii (Manchurian scorpion), this protein is Toxin BmKITc.